We begin with the raw amino-acid sequence, 741 residues long: 1,4-alpha-glucan branching enzyme GlgB 2 (741 aa).

Residues 1 to 38 (MALRDTSIPEPSGPVPPAPGACATAPPLDPTDRGRLLA) are disordered. Asp421 functions as the Nucleophile in the catalytic mechanism. Glu474 functions as the Proton donor in the catalytic mechanism.

Belongs to the glycosyl hydrolase 13 family. GlgB subfamily. Monomer.

The enzyme catalyses Transfers a segment of a (1-&gt;4)-alpha-D-glucan chain to a primary hydroxy group in a similar glucan chain.. It functions in the pathway glycan biosynthesis; glycogen biosynthesis. Catalyzes the formation of the alpha-1,6-glucosidic linkages in glycogen by scission of a 1,4-alpha-linked oligosaccharide from growing alpha-1,4-glucan chains and the subsequent attachment of the oligosaccharide to the alpha-1,6 position. The polypeptide is 1,4-alpha-glucan branching enzyme GlgB 2 (glgB2) (Streptomyces coelicolor (strain ATCC BAA-471 / A3(2) / M145)).